Consider the following 269-residue polypeptide: Glutamate 5-kinase (269 aa).

Lys-14 is a binding site for ATP. Residues Ser-54, Asp-141, and Asn-157 each coordinate substrate. ATP is bound by residues 177–178 (SD) and 219–225 (TGGMVTK).

This sequence belongs to the glutamate 5-kinase family.

The protein localises to the cytoplasm. The catalysed reaction is L-glutamate + ATP = L-glutamyl 5-phosphate + ADP. It participates in amino-acid biosynthesis; L-proline biosynthesis; L-glutamate 5-semialdehyde from L-glutamate: step 1/2. Catalyzes the transfer of a phosphate group to glutamate to form L-glutamate 5-phosphate. This is Glutamate 5-kinase from Clostridium perfringens (strain 13 / Type A).